The primary structure comprises 707 residues: Trans-feruloyl-CoA synthase FCS1 (707 aa).

ATP contacts are provided by residues His267 and 524-535 (ARAIGYPVVMKA). The 52-residue stretch at 498-549 (KELLRPLGIAFPPSQFAANAEAAAAAARAIGYPVVMKAQAAALGHKSDAGGV) folds into the ATP-grasp domain.

The protein in the N-terminal section; belongs to the acetate CoA ligase alpha subunit family. In the C-terminal section; belongs to the acetate CoA ligase beta subunit family. As to quaternary structure, homodimer.

It carries out the reaction (E)-ferulate + ATP + CoA = (E)-feruloyl-CoA + ADP + phosphate. Catalyzes the formation of feruloyl-CoA, ADP and phosphate from ferulate, CoA and ATP. The polypeptide is Trans-feruloyl-CoA synthase FCS1 (Unknown prokaryotic organism).